Reading from the N-terminus, the 96-residue chain is ATP synthase subunit f, mitochondrial (96 aa).

Belongs to the ATPase F chain family.

Its subcellular location is the mitochondrion. It localises to the mitochondrion inner membrane. Its function is as follows. Mitochondrial membrane ATP synthase (F(1)F(0) ATP synthase or Complex V) produces ATP from ADP in the presence of a proton gradient across the membrane which is generated by electron transport complexes of the respiratory chain. F-type ATPases consist of two structural domains, F(1) - containing the extramembraneous catalytic core and F(0) - containing the membrane proton channel, linked together by a central stalk and a peripheral stalk. During catalysis, ATP synthesis in the catalytic domain of F(1) is coupled via a rotary mechanism of the central stalk subunits to proton translocation. This is ATP synthase subunit f, mitochondrial (atp17) from Schizosaccharomyces pombe (strain 972 / ATCC 24843) (Fission yeast).